Consider the following 873-residue polypeptide: MAAIPTPRLHRGVTHLSRQTKSRARHPMSTPQHTPMMQQYLALKREHADKLLFYRMGDFYELFYEDAEKASRLLDITLTARGASAGNPIKMAGIPYHAAEGYLARLVKMGESVAIAEQIGDPALAKGPVERKVVRIVTPGTLTDAALLDDKRDNLVLAVNMVKGVLGLAWLSLASGEFKIMQASVEDLASELERLKPAELVIPDDTGLAAFEGISTPKKKLPPWQFDIESSKLALTRHFGTRDLAGFGADTLPVAVGAAGALLEYVKSTQGVNPAHISALSVEDAGELIRMDAATRRNLELTETIRGEASPTLASLLDTCATSMGSRLLGHWLHHPMRNHGKLARRHGAVRALLSRYQDVHAELDQVSDIERITSRVALRSARPRDLSALRDSLTALSGVKALAASLDSELLNELAGVLPTESPVQKMLAAAILPEPATFLRDGGVINDGFSPVLDELRAIQTDCGDFLLKLEAREKERTGITTLKVEFNRVHGFYIEVSKAQSDKVPDDYRRRQTLKNAERYITPELKEFEDKALTAQDRALALEKQLYEALLDQLAPHIAELKLIAQAVAALDVLSAFAQRAAIGNYAEPQFVPEPKLDIVAGRHPVVEAEVERFIANDTRLSAERKLLLITGPNMGGKSTYMRQNALITLLAHVGSFVPADSAVIGPIDRIFTRIGASDDLAGGRSTFMVEMTETANILNNASEHSLVLMDEVGRGTSTFDGLALAWAIARALIEKNRAYTLFATHYFELTTLAGEYPAVANVHLSAVEHKDRIVFLHHVEDGPASQSYGLAVAQLAGVPAKVIRDARRHLAELENQSAARVQPDLFSAPAPASEPELSPAMDRLQEIDPDVLSPRQALEILYELKKLAD.

Residues 1–34 (MAAIPTPRLHRGVTHLSRQTKSRARHPMSTPQHT) are disordered. Over residues 8 to 26 (RLHRGVTHLSRQTKSRARH) the composition is skewed to basic residues. ATP is bound at residue 635–642 (GPNMGGKS).

It belongs to the DNA mismatch repair MutS family.

In terms of biological role, this protein is involved in the repair of mismatches in DNA. It is possible that it carries out the mismatch recognition step. This protein has a weak ATPase activity. The sequence is that of DNA mismatch repair protein MutS from Chromobacterium violaceum (strain ATCC 12472 / DSM 30191 / JCM 1249 / CCUG 213 / NBRC 12614 / NCIMB 9131 / NCTC 9757 / MK).